Here is a 443-residue protein sequence, read N- to C-terminus: UDP-N-acetylmuramate--L-alanine ligase (443 aa).

110-116 is a binding site for ATP; the sequence is GAHGKTS.

The protein belongs to the MurCDEF family.

It is found in the cytoplasm. It carries out the reaction UDP-N-acetyl-alpha-D-muramate + L-alanine + ATP = UDP-N-acetyl-alpha-D-muramoyl-L-alanine + ADP + phosphate + H(+). Its pathway is cell wall biogenesis; peptidoglycan biosynthesis. Cell wall formation. The chain is UDP-N-acetylmuramate--L-alanine ligase from Lactococcus lactis subsp. cremoris (strain SK11).